We begin with the raw amino-acid sequence, 92 residues long: Small ribosomal subunit protein uS19 (92 aa).

This sequence belongs to the universal ribosomal protein uS19 family.

In terms of biological role, protein S19 forms a complex with S13 that binds strongly to the 16S ribosomal RNA. The polypeptide is Small ribosomal subunit protein uS19 (Mycoplasmopsis agalactiae (strain NCTC 10123 / CIP 59.7 / PG2) (Mycoplasma agalactiae)).